Reading from the N-terminus, the 142-residue chain is Large ribosomal subunit protein uL13 (142 aa).

Belongs to the universal ribosomal protein uL13 family. Part of the 50S ribosomal subunit.

Its function is as follows. This protein is one of the early assembly proteins of the 50S ribosomal subunit, although it is not seen to bind rRNA by itself. It is important during the early stages of 50S assembly. The protein is Large ribosomal subunit protein uL13 of Histophilus somni (Haemophilus somnus).